A 347-amino-acid polypeptide reads, in one-letter code: Suppressor of RNA-mediated gene silencing (347 aa).

This sequence belongs to the phytoreovirus non-structural protein 10 family.

Functionally, suppressor of RNA-mediated gene silencing, also known as post-transcriptional gene silencing (PTGS), a mechanism of plant viral defense that limits the accumulation of viral RNAs. The protein is Suppressor of RNA-mediated gene silencing of Catharanthus roseus (Madagascar periwinkle).